Reading from the N-terminus, the 107-residue chain is Replication restart protein PriB (107 aa).

Positions Ile8–Asp107 constitute an SSB domain.

This sequence belongs to the PriB family. As to quaternary structure, homodimer. Interacts with PriA and DnaT. Component of the replication restart primosome. Primosome assembly occurs via a 'hand-off' mechanism. PriA binds to replication forks, subsequently PriB then DnaT bind; DnaT then displaces ssDNA to generate the helicase loading substrate.

Functionally, involved in the restart of stalled replication forks, which reloads the replicative helicase on sites other than the origin of replication; the PriA-PriB pathway is the major replication restart pathway. During primosome assembly it facilitates complex formation between PriA and DnaT on DNA; stabilizes PriA on DNA. Stimulates the DNA unwinding activity of PriA helicase. In Actinobacillus succinogenes (strain ATCC 55618 / DSM 22257 / CCUG 43843 / 130Z), this protein is Replication restart protein PriB.